We begin with the raw amino-acid sequence, 248 residues long: MSGHSKWHNIQGRKNAQDAKRGKIFQKISRDLYQAAKAGDPDPANNAQLRLVIDKAHAANMPKKNIDRAIAKASGIGGAKFEEVTYEGYGPGGVAVMVSALTDNKNRTASAVRSAFSHSGGSLGASGSVSYMFDRKGLIEILRDDLDKSEDDMLMDALDAGAEDMKATEEKFQIFTDPSSMTDVRDALQEQGYELDTAEVTMIPQNRTEVPADKAKQYRHLIDELTENDDVADIYETGILPDEDDDEE.

Residues 1–22 (MSGHSKWHNIQGRKNAQDAKRG) are disordered.

The protein belongs to the TACO1 family.

The protein resides in the cytoplasm. This Limosilactobacillus reuteri subsp. reuteri (strain JCM 1112) (Lactobacillus reuteri) protein is Probable transcriptional regulatory protein LAR_0538.